The following is a 240-amino-acid chain: MADIRITGRMVNFSRITFDTNDHDVIRQQLSNILNEGSYQGTVVIIDSTVEQELIALIQLLVSMGLQPMAVIDGILGDEARAIQFPVLPADQPLQRIKPTAEQVAIVEKPTSAQASVETKKPLNNNAVAHITSYHDEILRTGQSLVQDQGDIILKAGMNSGSEVIASGNIHIYGTVRGRVIAGAGGHAAARIFCQSLEAELVSIAGTYCVADDIPKHVVKKPVHIYLNEKQELEFEALEL.

Belongs to the MinC family. Interacts with MinD and FtsZ.

In terms of biological role, cell division inhibitor that blocks the formation of polar Z ring septums. Rapidly oscillates between the poles of the cell to destabilize FtsZ filaments that have formed before they mature into polar Z rings. Prevents FtsZ polymerization. This is Probable septum site-determining protein MinC from Acinetobacter baumannii (strain ATCC 17978 / DSM 105126 / CIP 53.77 / LMG 1025 / NCDC KC755 / 5377).